A 527-amino-acid polypeptide reads, in one-letter code: MADNRDPASDQMKHWKEQRAAQKPDILTTGSGNPIGDKLNILTAGPRGPLLVQDVVFTDEMAHFDRERIPERVVHAKGAGAFGYFEVTHDITRFSKAKVFEHVGKRTPIAVRFSTVAGESGSADTVRDPRGFAVKFYTEDGNWDLVGNNTPIFFIRDAILFPSFIHSQKRNPQTHLKDPDMVWDFWSLRPESLHQVSFLFSDRGIPDGHRHMNGYGSHTFKLVNEKGEAVYCKFHYKTDQGIKNLSVEDAARLPQEDPDYGIRDLFNAIATGNYPSWTFYIQVMTFQEAEAFPFNPFDLTKVWPHSEYPLIPVGKLVLNRNPVNYFAEVEQMAFDPSNMPPGIEPSPDKMLQGRLFGYPDTHRHRLGANYLQIPVNCPFRARVANYQRDGPMCFQDNQGGAPNYYPNSFSAPEQTHSALEHCTRYSGDVQRFNSANEDNVTQVRTFYLNVLNEEERKRLCENIAGHLKDAQLFIQKKAVKNFSDVHPDYGARIQALLDKYNAEXPENAVHTYVQAGSHLAAREKANL.

Residues 1–22 (MADNRDPASDQMKHWKEQRAAQ) are compositionally biased toward basic and acidic residues. The interval 1-32 (MADNRDPASDQMKHWKEQRAAQKPDILTTGSG) is disordered. Ala2 is modified (N-acetylalanine). Ser9 is subject to Phosphoserine. Lys13 is subject to N6-succinyllysine. Active-site residues include His75 and Asn148. NADP(+) is bound by residues His194, Ser201, Arg203, and Asn213. Lys221 carries the N6-succinyllysine modification. At Lys233 the chain carries N6-acetyllysine. Residues Lys237, Trp303, and His305 each coordinate NADP(+). Tyr358 contacts heme. Ser417 and Ser434 each carry phosphoserine. Lys480 is subject to N6-acetyllysine; alternate. At Lys480 the chain carries N6-succinyllysine; alternate. N6-acetyllysine is present on Lys499. Thr511 bears the Phosphothreonine mark. Residue Ser517 is modified to Phosphoserine. The Microbody targeting signal; atypical signature appears at 524 to 527 (KANL).

The protein belongs to the catalase family. In terms of assembly, homotetramer. Interacts (via microbody targeting signal) with PEX5, monomeric form interacts with PEX5, leading to its translocation into peroxisomes. Requires heme as cofactor. It depends on NADP(+) as a cofactor.

Its subcellular location is the peroxisome matrix. It catalyses the reaction 2 H2O2 = O2 + 2 H2O. Functionally, catalyzes the degradation of hydrogen peroxide (H(2)O(2)) generated by peroxisomal oxidases to water and oxygen, thereby protecting cells from the toxic effects of hydrogen peroxide. Promotes growth of cells including T-cells, B-cells, myeloid leukemia cells, melanoma cells, mastocytoma cells and normal and transformed fibroblast cells. This chain is Catalase (CAT), found in Sus scrofa (Pig).